The chain runs to 704 residues: G-protein coupled receptor-associated protein LMBRD2B (704 aa).

The Extracellular portion of the chain corresponds to M1–G3. Residues A4–L21 traverse the membrane as a helical segment. The Cytoplasmic segment spans residues H22 to M33. The helical transmembrane segment at V34–L54 threads the bilayer. The Extracellular segment spans residues D55–G111. N88 carries an N-linked (GlcNAc...) asparagine glycan. Residues I112–L132 traverse the membrane as a helical segment. Residues P133 to N157 lie on the Cytoplasmic side of the membrane. A helical membrane pass occupies residues A158–H178. Topologically, residues P179–G192 are extracellular. The helical transmembrane segment at I193–V213 threads the bilayer. Residues D214–R393 lie on the Cytoplasmic side of the membrane. Residues K235–Y266 adopt a coiled-coil conformation. A helical membrane pass occupies residues V394 to F414. At S415–Y438 the chain is on the extracellular side. Residues I439 to F459 traverse the membrane as a helical segment. Topologically, residues R460–Q481 are cytoplasmic. A helical transmembrane segment spans residues F482 to I502. Over H503 to V527 the chain is Extracellular. A helical transmembrane segment spans residues L528–I548. The Cytoplasmic segment spans residues A549–V704. The stretch at D576–R612 forms a coiled coil. Disordered regions lie at residues D613–R654 and T672–V704. The segment covering Y631–R654 has biased composition (polar residues).

This sequence belongs to the LIMR family.

The protein localises to the cell membrane. May associate with G-protein coupled receptors and regulate downstream signaling pathways. The sequence is that of G-protein coupled receptor-associated protein LMBRD2B (lmbrd2b) from Danio rerio (Zebrafish).